A 115-amino-acid polypeptide reads, in one-letter code: Large ribosomal subunit protein bL20 (115 aa).

It belongs to the bacterial ribosomal protein bL20 family.

Binds directly to 23S ribosomal RNA and is necessary for the in vitro assembly process of the 50S ribosomal subunit. It is not involved in the protein synthesizing functions of that subunit. In Malacoplasma penetrans (strain HF-2) (Mycoplasma penetrans), this protein is Large ribosomal subunit protein bL20.